A 207-amino-acid chain; its full sequence is Dephospho-CoA kinase (207 aa).

Positions 12–207 (LIGITGMIGG…LYSTLLGKML (196 aa)) constitute a DPCK domain. Position 20-25 (20-25 (GGGKST)) interacts with ATP.

This sequence belongs to the CoaE family.

It localises to the cytoplasm. It carries out the reaction 3'-dephospho-CoA + ATP = ADP + CoA + H(+). The protein operates within cofactor biosynthesis; coenzyme A biosynthesis; CoA from (R)-pantothenate: step 5/5. Its function is as follows. Catalyzes the phosphorylation of the 3'-hydroxyl group of dephosphocoenzyme A to form coenzyme A. The protein is Dephospho-CoA kinase of Leptospira interrogans serogroup Icterohaemorrhagiae serovar Lai (strain 56601).